The primary structure comprises 117 residues: MISIILVMIGGGFGAITRSAITDYFNHKFTSKLPIATLIVNLVGSFLIGLNIGLSISISWFPAFFVTGFLGGLTTFSTLAKELTLMMTPKFNINLFLNYSLLQFIIGFIACYIGYHI.

Transmembrane regions (helical) follow at residues 1–21 (MISI…RSAI) and 46–66 (FLIG…AFFV). Na(+) is bound by residues G71 and T74. The helical transmembrane segment at 95 to 115 (LFLNYSLLQFIIGFIACYIGY) threads the bilayer.

This sequence belongs to the fluoride channel Fluc/FEX (TC 1.A.43) family.

The protein resides in the cell membrane. The catalysed reaction is fluoride(in) = fluoride(out). Na(+) is not transported, but it plays an essential structural role and its presence is essential for fluoride channel function. Functionally, fluoride-specific ion channel. Important for reducing fluoride concentration in the cell, thus reducing its toxicity. The chain is Fluoride-specific ion channel FluC 2 from Staphylococcus aureus (strain MSSA476).